The chain runs to 34 residues: Brevinin-2Rf (34 aa).

Cys28 and Cys34 are oxidised to a cystine.

In terms of tissue distribution, expressed by the skin glands.

The protein resides in the secreted. In terms of biological role, antimicrobial peptide. The chain is Brevinin-2Rf from Pelophylax ridibundus (Marsh frog).